Here is a 229-residue protein sequence, read N- to C-terminus: Echinolectin 1 (229 aa).

An N-linked (GlcNAc...) asparagine glycan is attached at N94.

It is found in the secreted. The protein is Echinolectin 1 of Echinometra lucunter (Rock-boring urchin).